The following is a 374-amino-acid chain: tRNA-specific 2-thiouridylase MnmA (374 aa).

ATP is bound by residues 8–15 (GLSGGVDS) and Met34. Residues 104-106 (NPD) are interaction with target base in tRNA. Cys109 (nucleophile) is an active-site residue. A disulfide bond links Cys109 and Cys208. ATP is bound at residue Gly134. The segment at 158-160 (KDQ) is interaction with tRNA. The active-site Cysteine persulfide intermediate is the Cys208. Positions 321 to 322 (RY) are interaction with tRNA.

Belongs to the MnmA/TRMU family.

It localises to the cytoplasm. The catalysed reaction is S-sulfanyl-L-cysteinyl-[protein] + uridine(34) in tRNA + AH2 + ATP = 2-thiouridine(34) in tRNA + L-cysteinyl-[protein] + A + AMP + diphosphate + H(+). Functionally, catalyzes the 2-thiolation of uridine at the wobble position (U34) of tRNA, leading to the formation of s(2)U34. The protein is tRNA-specific 2-thiouridylase MnmA of Mesoplasma florum (strain ATCC 33453 / NBRC 100688 / NCTC 11704 / L1) (Acholeplasma florum).